Reading from the N-terminus, the 280-residue chain is 3,2-trans-enoyl-CoA isomerase (280 aa).

Substrate contacts are provided by residues 68-72 (SGADF) and Leu-126. Glu-158 functions as the Proton donor/acceptor in the catalytic mechanism. The short motif at 278-280 (HRL) is the Microbody targeting signal element.

Belongs to the enoyl-CoA hydratase/isomerase family. Homohexamer, dimer of trimers. Interacts with DCI1.

It localises to the peroxisome. It carries out the reaction a (3Z)-enoyl-CoA = a 4-saturated (2E)-enoyl-CoA. The enzyme catalyses a (3E)-enoyl-CoA = a 4-saturated (2E)-enoyl-CoA. It functions in the pathway lipid metabolism; fatty acid beta-oxidation. Essential for the beta oxidation of unsaturated fatty acids. The chain is 3,2-trans-enoyl-CoA isomerase (ECI1) from Saccharomyces cerevisiae (strain ATCC 204508 / S288c) (Baker's yeast).